We begin with the raw amino-acid sequence, 464 residues long: 3-isopropylmalate dehydratase large subunit (464 aa).

[4Fe-4S] cluster is bound by residues C337, C397, and C400.

Belongs to the aconitase/IPM isomerase family. LeuC type 1 subfamily. In terms of assembly, heterodimer of LeuC and LeuD. The cofactor is [4Fe-4S] cluster.

It carries out the reaction (2R,3S)-3-isopropylmalate = (2S)-2-isopropylmalate. The protein operates within amino-acid biosynthesis; L-leucine biosynthesis; L-leucine from 3-methyl-2-oxobutanoate: step 2/4. Its function is as follows. Catalyzes the isomerization between 2-isopropylmalate and 3-isopropylmalate, via the formation of 2-isopropylmaleate. The polypeptide is 3-isopropylmalate dehydratase large subunit (Bacillus cereus (strain ATCC 10987 / NRS 248)).